The chain runs to 491 residues: Peptidoglycan D,D-transpeptidase PbpA (491 aa).

The Cytoplasmic portion of the chain corresponds to 1-7; sequence MNASLRR. Residues 8–28 form a helical; Signal-anchor for type II membrane protein membrane-spanning segment; that stretch reads ISVTVMALIVLLLLNATMTQV. Topologically, residues 29–491 are periplasmic; it reads FTADGLRADP…VIEAALQGEP (463 aa). The transpeptidase stretch occupies residues 160–484; it reads GAVVALEPST…AAPIGRAVIE (325 aa). Residue Ser-222 is the Acyl-ester intermediate of the active site.

It belongs to the transpeptidase family.

The protein localises to the cell inner membrane. It carries out the reaction Preferential cleavage: (Ac)2-L-Lys-D-Ala-|-D-Ala. Also transpeptidation of peptidyl-alanyl moieties that are N-acyl substituents of D-alanine.. It functions in the pathway cell wall biogenesis; peptidoglycan biosynthesis. Transpeptidase that catalyzes cross-linking of the peptidoglycan cell wall. Required for the regulation of cell length. The polypeptide is Peptidoglycan D,D-transpeptidase PbpA (pbpA) (Mycobacterium tuberculosis (strain CDC 1551 / Oshkosh)).